Consider the following 110-residue polypeptide: V-type proton ATPase subunit G1 (110 aa).

Met-1 carries the post-translational modification N-acetylmethionine. The interval 60-80 (KLEETSGDSGANVKRLEQETD) is disordered.

It belongs to the V-ATPase G subunit family. As to quaternary structure, V-ATPase is a heteromultimeric enzyme composed of a peripheral catalytic V1 complex (components A to H) attached to an integral membrane V0 proton pore complex (components: a, c, c'', d and e).

The protein localises to the cell membrane. It is found in the vacuole membrane. Functionally, catalytic subunit of the peripheral V1 complex of vacuolar ATPase (V-ATPase). V-ATPase is responsible for acidifying a variety of intracellular compartments in eukaryotic cells. This chain is V-type proton ATPase subunit G1 (VHA-G1), found in Arabidopsis thaliana (Mouse-ear cress).